The sequence spans 265 residues: Uridylate kinase (265 aa).

Residues 1–29 are disordered; that stretch reads MTESREPHVAGSAAPRPEPANGLASGQPS. An ATP-binding site is contributed by 40–43; the sequence is KLGG. Glycine 81 serves as a coordination point for UMP. Residues glycine 82 and arginine 86 each contribute to the ATP site. Residues aspartate 101 and 162-169 each bind UMP; that span reads MGLPYFST. The ATP site is built by phenylalanine 195 and aspartate 198.

It belongs to the UMP kinase family. In terms of assembly, homohexamer.

The protein localises to the cytoplasm. It carries out the reaction UMP + ATP = UDP + ADP. It functions in the pathway pyrimidine metabolism; CTP biosynthesis via de novo pathway; UDP from UMP (UMPK route): step 1/1. With respect to regulation, inhibited by UTP. Its function is as follows. Catalyzes the reversible phosphorylation of UMP to UDP. The protein is Uridylate kinase of Mycolicibacterium paratuberculosis (strain ATCC BAA-968 / K-10) (Mycobacterium paratuberculosis).